We begin with the raw amino-acid sequence, 368 residues long: Uroporphyrinogen decarboxylase (368 aa).

Residues 41–45, aspartate 91, tyrosine 168, serine 223, and histidine 345 contribute to the substrate site; that span reads RQAGR.

This sequence belongs to the uroporphyrinogen decarboxylase family. Homodimer.

Its subcellular location is the cytoplasm. The enzyme catalyses uroporphyrinogen III + 4 H(+) = coproporphyrinogen III + 4 CO2. The protein operates within porphyrin-containing compound metabolism; protoporphyrin-IX biosynthesis; coproporphyrinogen-III from 5-aminolevulinate: step 4/4. In terms of biological role, catalyzes the decarboxylation of four acetate groups of uroporphyrinogen-III to yield coproporphyrinogen-III. This Psychrobacter sp. (strain PRwf-1) protein is Uroporphyrinogen decarboxylase.